Reading from the N-terminus, the 161-residue chain is Large ribosomal subunit protein bL17 (161 aa).

The disordered stretch occupies residues 126-161; that stretch reads KVAKKATRTRRSKKTTEAAPAAEVPATEEPKAESAE. Residues 129–138 are compositionally biased toward basic residues; sequence KKATRTRRSK. Over residues 142-152 the composition is skewed to low complexity; sequence EAAPAAEVPAT.

This sequence belongs to the bacterial ribosomal protein bL17 family. As to quaternary structure, part of the 50S ribosomal subunit. Contacts protein L32.

This chain is Large ribosomal subunit protein bL17, found in Bacteroides fragilis (strain ATCC 25285 / DSM 2151 / CCUG 4856 / JCM 11019 / LMG 10263 / NCTC 9343 / Onslow / VPI 2553 / EN-2).